The following is a 249-amino-acid chain: MTAKLILLRHGESEWNSKNLFTGWVDVDLNEKGEGEARHAADLLKQENLLPDIVHTSLLRRAIHTAYLALDGCDRHWIPVHRSWRLNERHYGALQGLNKAETKEKYGNDQFMAWRRSYDVRPPDLDRDSEFSQFHDPRYADIPASERPVAECLKDVVARMVPYFTSDIAADLKDGKTVLVAAHGNSLRALVKHLDEISDEDIAGLNIPTGIPLFYELDDNLKPVTRGGRYLDPEAAAAGAKAVANQGNK.

Residues R9–N16, T22–G23, R61, E88–Y91, K99, R115–R116, and G184–N185 contribute to the substrate site. H10 functions as the Tele-phosphohistidine intermediate in the catalytic mechanism. E88 serves as the catalytic Proton donor/acceptor.

The protein belongs to the phosphoglycerate mutase family. BPG-dependent PGAM subfamily.

The enzyme catalyses (2R)-2-phosphoglycerate = (2R)-3-phosphoglycerate. It participates in carbohydrate degradation; glycolysis; pyruvate from D-glyceraldehyde 3-phosphate: step 3/5. Its function is as follows. Catalyzes the interconversion of 2-phosphoglycerate and 3-phosphoglycerate. This Cutibacterium acnes (strain DSM 16379 / KPA171202) (Propionibacterium acnes) protein is 2,3-bisphosphoglycerate-dependent phosphoglycerate mutase.